A 498-amino-acid polypeptide reads, in one-letter code: Nucleobase transporter PlAzg2 (498 aa).

The next 13 helical transmembrane spans lie at 88–108, 118–138, 142–162, 169–189, 203–223, 236–256, 259–279, 312–332, 357–377, 388–408, 412–432, 443–463, and 478–498; these read LLAGTVSFFAAVYIIIVNSSI, AGIIATILASAIGCFIMGLWG, LVIVPGMGINAMFTYTLVQGM, ALAAVMMSGICFFAISMTSLV, AISVGIGLMLVLIGLHKGGVI, FADPGVLVTLATLALTCILYI, VPGNLLLAIIGGSALAYLFKA, TLVIAVFSLTLVIVFENVGLI, ILSGIFGTSPTVSTVEAAAGI, IATGTLFLLSFIAMPVITLVP, VAPILIFIGGLMMPAVRHISF, FIIAFIPLMHSIVDGIAIGFI, and VKPLFYIISLLFVMHFVLQTM.

It belongs to the nucleobase:cation symporter-2 (NCS2) (TC 2.A.40) family. Azg-like subfamily.

The protein localises to the cell membrane. Inhibited by the proton gradient disruptor carbonyl cyanide m-chlorophenylhydrazone (CCCP), but not by the sodium gradient disruptor ouabain. Transports adenine, guanine, hypoxanthine, xanthine, cytosine and uracil. Transport is probably proton-dependent. The chain is Nucleobase transporter PlAzg2 from Paenibacillus larvae subsp. larvae (strain NRRL B-3650 / LMG 16245).